The following is a 226-amino-acid chain: MPLSNAQLAQTIDHTLLAPDASDAQIRELCRQAAEHRFYSVCVNSANVPLAARELAETGVLVCAVVGFPLGAGLSAAKAFEATAAIAAGAGEIDMVINLGALKSGRADDVKADIDAVHRACGTVPLKVILETGLLTDDEKVRVCEMCRDLGVAFVKTSTGFGHGGATLADVALMRRTVGPTLGVKASGGVRDRAAALAMLEAGATRLGTSSGVAIVTDQGGGAAGY.

The Proton donor/acceptor role is filled by D94. The active-site Schiff-base intermediate with acetaldehyde is K156. The active-site Proton donor/acceptor is the K185.

This sequence belongs to the DeoC/FbaB aldolase family. DeoC type 1 subfamily.

It localises to the cytoplasm. It carries out the reaction 2-deoxy-D-ribose 5-phosphate = D-glyceraldehyde 3-phosphate + acetaldehyde. It functions in the pathway carbohydrate degradation; 2-deoxy-D-ribose 1-phosphate degradation; D-glyceraldehyde 3-phosphate and acetaldehyde from 2-deoxy-alpha-D-ribose 1-phosphate: step 2/2. Its function is as follows. Catalyzes a reversible aldol reaction between acetaldehyde and D-glyceraldehyde 3-phosphate to generate 2-deoxy-D-ribose 5-phosphate. This chain is Deoxyribose-phosphate aldolase, found in Burkholderia orbicola (strain MC0-3).